A 422-amino-acid chain; its full sequence is Aliphatic (R)-hydroxynitrile lyase (422 aa).

Zn(2+) is bound by residues C63, H85, C115, C118, C121, C129, and C199.

This sequence belongs to the zinc-containing alcohol dehydrogenase family. Homodimer. Zn(2+) serves as cofactor.

The enzyme catalyses (2R)-2-hydroxy-2-methylbutanenitrile = butan-2-one + hydrogen cyanide. Involved in the catabolism of cyanogenic glycosides. Naturally occurring substrates are the aliphatic acetone cyanohydrin and butan-2-one cyanohydrin, which are the aglycones of the cyanogenic glycosides linamarin, lotaustralin, linustatin and neolinustatin. Can use various aliphatic ketones and aldehydes as substrates, but not aromatic ketones. In Linum usitatissimum (Flax), this protein is Aliphatic (R)-hydroxynitrile lyase.